Here is a 57-residue protein sequence, read N- to C-terminus: VIHCDAATICPDGTTCCLSPYGVWYCCPFSMGQCCRDGIHCCRHGYHCDSTSTHCLR.

2 disulfide bridges follow: cysteine 4/cysteine 16 and cysteine 10/cysteine 26.

Belongs to the granulin family. In terms of processing, granulins are disulfide bridged. Ubiquitous.

The protein localises to the secreted. In terms of biological role, granulins have possible cytokine-like activity. They may play a role in inflammation, wound repair, and tissue remodeling. The protein is Granulin-1 of Cyprinus carpio (Common carp).